Consider the following 303-residue polypeptide: Monoglyceride lipase (303 aa).

Thr10 is modified (phosphothreonine). Residue Tyr58 is modified to 3'-nitrotyrosine. The Nucleophile role is filled by Ser122. At Ser189 the chain carries Phosphoserine. Catalysis depends on charge relay system residues Asp239 and His269.

This sequence belongs to the AB hydrolase superfamily. Monoacylglycerol lipase family. In terms of assembly, homodimer. In terms of tissue distribution, ubiquitous. Highly expressed in adipose tissue, adrenal gland, ovary, heart, spleen, lung, skeletal muscle, kidney and testis. Highly expressed throughout the brain.

The protein localises to the cytoplasm. It is found in the cytosol. Its subcellular location is the membrane. It carries out the reaction Hydrolyzes glycerol monoesters of long-chain fatty acids.. The enzyme catalyses a 1-acylglycerol + H2O = glycerol + a fatty acid + H(+). It catalyses the reaction a 2-acylglycerol + H2O = glycerol + a fatty acid + H(+). The catalysed reaction is 1-octanoylglycerol + H2O = octanoate + glycerol + H(+). It carries out the reaction 2-(5Z,8Z,11Z,14Z-eicosatetraenoyl)-glycerol + H2O = glycerol + (5Z,8Z,11Z,14Z)-eicosatetraenoate + H(+). The enzyme catalyses 1-decanoylglycerol + H2O = decanoate + glycerol + H(+). It catalyses the reaction 1-dodecanoylglycerol + H2O = dodecanoate + glycerol + H(+). The catalysed reaction is 1-tetradecanoylglycerol + H2O = tetradecanoate + glycerol + H(+). It carries out the reaction 2-hexadecanoylglycerol + H2O = glycerol + hexadecanoate + H(+). The enzyme catalyses 1-(9Z-octadecenoyl)-glycerol + H2O = glycerol + (9Z)-octadecenoate + H(+). It catalyses the reaction 2-(9Z-octadecenoyl)-glycerol + H2O = glycerol + (9Z)-octadecenoate + H(+). The catalysed reaction is 2-(9Z,12Z-octadecadienoyl)-glycerol + H2O = (9Z,12Z)-octadecadienoate + glycerol + H(+). It carries out the reaction 1-(5Z,8Z,11Z,14Z-eicosatetraenoyl)-glycerol + H2O = glycerol + (5Z,8Z,11Z,14Z)-eicosatetraenoate + H(+). The enzyme catalyses 1-(9Z,12Z-octadecadienoyl)-glycerol + H2O = (9Z,12Z)-octadecadienoate + glycerol + H(+). It catalyses the reaction 1-hexadecanoylglycerol + H2O = glycerol + hexadecanoate + H(+). The catalysed reaction is 1-octadecanoylglycerol + H2O = octadecanoate + glycerol + H(+). It carries out the reaction prostaglandin E2 1-glyceryl ester + H2O = prostaglandin E2 + glycerol + H(+). The enzyme catalyses prostaglandin D2-1-glycerol ester + H2O = prostaglandin D2 + glycerol + H(+). It catalyses the reaction 2-glyceryl-15-deoxy-Delta(12,14)-prostaglandin J2 + H2O = 15-deoxy-Delta(12,14)-prostaglandin J2 + glycerol + H(+). The catalysed reaction is prostaglandin F2alpha 1-glyceryl ester + H2O = prostaglandin F2alpha + glycerol + H(+). It participates in glycerolipid metabolism; triacylglycerol degradation. Converts monoacylglycerides to free fatty acids and glycerol. Hydrolyzes the endocannabinoid 2-arachidonoylglycerol, and thereby contributes to the regulation of endocannabinoid signaling, nociperception and perception of pain. Regulates the levels of fatty acids that serve as signaling molecules and promote cancer cell migration, invasion and tumor growth. This is Monoglyceride lipase from Rattus norvegicus (Rat).